The chain runs to 583 residues: Chromosomal replication initiator protein DnaA (583 aa).

Positions 1 to 91 (MSNSNFSIEE…KHVLKTRLDL (91 aa)) are domain I, interacts with DnaA modulators. A domain II region spans residues 91–241 (LSVSLAITST…SFNDGLDGES (151 aa)). The tract at residues 151–239 (KAEQRDGASQ…SSSFNDGLDG (89 aa)) is disordered. A compositionally biased stretch (basic and acidic residues) spans 172-182 (EAARRREHDAD). The interval 242–458 (LLNKNYTFEN…GALIRVTAYC (217 aa)) is domain III, AAA+ region. ATP-binding residues include Gly-286, Gly-288, Lys-289, and Thr-290. Residues 459 to 583 (ALSHEPLTVE…TQKIKSHARD (125 aa)) are domain IV, binds dsDNA.

It belongs to the DnaA family. Oligomerizes as a right-handed, spiral filament on DNA at oriC.

The protein resides in the cytoplasm. In terms of biological role, plays an essential role in the initiation and regulation of chromosomal replication. ATP-DnaA binds to the origin of replication (oriC) to initiate formation of the DNA replication initiation complex once per cell cycle. Binds the DnaA box (a 9 base pair repeat at the origin) and separates the double-stranded (ds)DNA. Forms a right-handed helical filament on oriC DNA; dsDNA binds to the exterior of the filament while single-stranded (ss)DNA is stabiized in the filament's interior. The ATP-DnaA-oriC complex binds and stabilizes one strand of the AT-rich DNA unwinding element (DUE), permitting loading of DNA polymerase. After initiation quickly degrades to an ADP-DnaA complex that is not apt for DNA replication. Binds acidic phospholipids. The sequence is that of Chromosomal replication initiator protein DnaA from Corynebacterium jeikeium (strain K411).